The chain runs to 512 residues: Activin receptor type-2B (512 aa).

Positions 1-24 are cleaved as a signal peptide; sequence MSASWLTLAVLCATLGAGPGHGEA. At 25 to 137 the chain is on the extracellular side; sequence ETRECIYYNA…PPPPTPSLLN (113 aa). Cystine bridges form between C29–C59, C49–C77, C84–C103, C90–C102, and C104–C109. N-linked (GlcNAc...) asparagine glycans are attached at residues N42 and N65. Residues 138 to 158 form a helical membrane-spanning segment; the sequence is ILVYSLLPIAVLSVAILLAFW. Over 159 to 512 the chain is Cytoplasmic; the sequence is MYRHRKPPYG…VDLPPKESSI (354 aa). In terms of domain architecture, Protein kinase spans 190 to 478; that stretch reads LQLLEIKARG…LSAGCVEERI (289 aa). Residues 196-204 and K217 each bind ATP; that span reads KARGRFGCV. The Proton acceptor role is filled by D321.

The protein belongs to the protein kinase superfamily. TKL Ser/Thr protein kinase family. TGFB receptor subfamily. The cofactor is Mg(2+). Mn(2+) is required as a cofactor. Not expressed in hen anterior pituitary during the ovulatory cycle but expressed in the ovarian follicle.

The protein localises to the membrane. The catalysed reaction is L-threonyl-[receptor-protein] + ATP = O-phospho-L-threonyl-[receptor-protein] + ADP + H(+). The enzyme catalyses L-seryl-[receptor-protein] + ATP = O-phospho-L-seryl-[receptor-protein] + ADP + H(+). Its function is as follows. On ligand binding, forms a receptor complex consisting of two type II and two type I transmembrane serine/threonine kinases. Type II receptors phosphorylate and activate type I receptors which autophosphorylate, then bind and activate SMAD transcriptional regulators. Receptor for activin A, activin B and inhibin A. May modulate neuropeptide expression in dorsal root ganglia (DRG) neurons and ovarian follicle development. In Gallus gallus (Chicken), this protein is Activin receptor type-2B (ACVR2B).